Reading from the N-terminus, the 312-residue chain is Protein-methionine-sulfoxide reductase catalytic subunit MsrP (312 aa).

Residues 1–45 constitute a signal peptide (tat-type signal); it reads MPVYRPPRIAASEITPERFFLDRRSFLAAAGGLVLGGTGMAHAAA. Mo-molybdopterin-binding positions include Asn-69, 72–73, Cys-126, Thr-161, Asn-211, Arg-216, and 227–229; these read YE and GIK.

It belongs to the MsrP family. Heterodimer of a catalytic subunit (MsrP) and a heme-binding subunit (MsrQ). It depends on Mo-molybdopterin as a cofactor. Post-translationally, predicted to be exported by the Tat system. The position of the signal peptide cleavage has not been experimentally proven.

The protein localises to the periplasm. It catalyses the reaction L-methionyl-[protein] + a quinone + H2O = L-methionyl-(S)-S-oxide-[protein] + a quinol. It carries out the reaction L-methionyl-[protein] + a quinone + H2O = L-methionyl-(R)-S-oxide-[protein] + a quinol. Part of the MsrPQ system that repairs oxidized periplasmic proteins containing methionine sulfoxide residues (Met-O), using respiratory chain electrons. Thus protects these proteins from oxidative-stress damage caused by reactive species of oxygen and chlorine generated by the host defense mechanisms. MsrPQ is essential for the maintenance of envelope integrity under bleach stress, rescuing a wide series of structurally unrelated periplasmic proteins from methionine oxidation. The catalytic subunit MsrP is non-stereospecific, being able to reduce both (R-) and (S-) diastereoisomers of methionine sulfoxide. The chain is Protein-methionine-sulfoxide reductase catalytic subunit MsrP from Sinorhizobium fredii (strain NBRC 101917 / NGR234).